Here is a 65-residue protein sequence, read N- to C-terminus: Large ribosomal subunit protein bL35 (65 aa).

Belongs to the bacterial ribosomal protein bL35 family.

The chain is Large ribosomal subunit protein bL35 from Aeromonas hydrophila subsp. hydrophila (strain ATCC 7966 / DSM 30187 / BCRC 13018 / CCUG 14551 / JCM 1027 / KCTC 2358 / NCIMB 9240 / NCTC 8049).